The following is a 477-amino-acid chain: Delayed-rectifier potassium channel regulatory subunit KCNS2 (477 aa).

Residues 1-184 (MTRQSLWDVS…LALDNPGYSV (184 aa)) lie on the Cytoplasmic side of the membrane. Residues 185–206 (LSRVFSVLSILVVLGSIITMCL) traverse the membrane as a helical segment. Over 207–225 (NSLPDFQIPDSQGNPGEDP) the chain is Extracellular. A helical transmembrane segment spans residues 226-248 (RFEIVEHFGIAWFTFELVARFAV). Over 249–259 (APDFLKFFKNA) the chain is Cytoplasmic. The helical transmembrane segment at 260–280 (LNLIDLMSIVPFYITLVVNLV) threads the bilayer. Over 281 to 290 (VESSPTLANL) the chain is Extracellular. The helical; Voltage-sensor transmembrane segment at 291–311 (GRVAQVLRLMRIFRILKLARH) threads the bilayer. Residues 312–326 (STGLRSLGATLKYSY) are Cytoplasmic-facing. The helical transmembrane segment at 327-348 (KEVGLLLLYLSVGISIFSVVAY) threads the bilayer. Over 349–361 (TIEKEENEGLATI) the chain is Extracellular. Residues 362-373 (PACWWWATVSMT) constitute an intramembrane region (helical). The Selectivity filter signature appears at 374 to 379 (TVGYGD). Residues 374-381 (TVGYGDVV) lie within the membrane without spanning it. The Extracellular portion of the chain corresponds to 382–388 (PGTTAGK). The chain crosses the membrane as a helical span at residues 389–417 (LTASACILAGILVVVLPITLIFNKFSHFY). At 418–477 (RRQKQLESAMRSCDFGDGMKEVPSVNLRDYYAHKVKSLMASLTNMSRSSPSELSLDDSLH) the chain is on the cytoplasmic side.

It belongs to the potassium channel family. S (TC 1.A.1.2) subfamily. Kv9.2/KCNS2 sub-subfamily. Heterotetramer with KCNB1 and KCNB2. Does not form homomultimers. In terms of tissue distribution, detected in brain, but not in the other tissues tested. Expression was highest in the olfactory bulb, cerebral cortex, hippocampus, habenula, basolateral amygdaloid nuclei and cerebellum.

It is found in the cell membrane. Its function is as follows. Potassium channel regulatory subunit that modulate the delayed rectifier voltage-gated potassium channel activity of KCNB1 and KCNB2 by altering their kinetics, expression levels, and shifting the half-inactivation potential to more polarized values. While it does not form functional channels on its own, it can form functional heterotetrameric channels with KCNB1 and KCNB2. Each regulatory subunit has unique regulatory properties that can lead to extensive inhibition, significant changes in kinetics, and/or substantial shifts in the voltage dependencies of the inactivation process. This is Delayed-rectifier potassium channel regulatory subunit KCNS2 from Mus musculus (Mouse).